The sequence spans 1221 residues: A disintegrin and metalloproteinase with thrombospondin motifs 18 (1221 aa).

The N-terminal stretch at 1 to 47 (MECALLLACAFPAAGSGPPRGLAGLGRVAKALQLCCLCCASVAAALA) is a signal peptide. Residues 48–284 (SDSSSGASGL…EYGSSGRPRR (237 aa)) constitute a propeptide that is removed on maturation. Asn151 and Asn190 each carry an N-linked (GlcNAc...) asparagine glycan. Positions 252 to 259 (HFCGRRKK) match the Cysteine switch motif. A Zn(2+)-binding site is contributed by Cys254. The segment at 258–291 (KKYAPKPPTEDTYLRFDEYGSSGRPRRSAGKSQK) is disordered. Residues 265–275 (PTEDTYLRFDE) show a composition bias toward basic and acidic residues. The 206-residue stretch at 293–498 (LNVETLVVAD…PQAGCLVDEP (206 aa)) folds into the Peptidase M12B domain. The N-linked (GlcNAc...) asparagine glycan is linked to Asn313. Cystine bridges form between Cys369-Cys420, Cys395-Cys402, Cys414-Cys493, Cys453-Cys477, Cys521-Cys546, Cys532-Cys553, Cys541-Cys572, Cys566-Cys577, Cys601-Cys638, Cys605-Cys643, and Cys616-Cys628. His436 serves as a coordination point for Zn(2+). Glu437 is an active-site residue. Zn(2+) contacts are provided by His440 and His446. The 80-residue stretch at 498-577 (PKQAGQYKYP…LSMWCRQGQC (80 aa)) folds into the Disintegrin domain. The TSP type-1 1 domain maps to 589-644 (HGQWSAWSKWSECSRTCGGGVKFQERHCNNPKPQYGGLFCPGSSRIYQLCNINPCN). N-linked (GlcNAc...) asparagine glycosylation is found at Asn745, Asn838, and Asn909. The interval 750–876 (FYKGLYLNQH…TPPATKRPAY (127 aa)) is spacer. TSP type-1 domains follow at residues 931 to 990 (CPAY…NSHA), 991 to 1049 (CPPQ…GRCP), 1052 to 1116 (SRLQ…RACP), and 1123 to 1178 (MVAG…NFCP). One can recognise a PLAC domain in the interval 1184–1221 (EDPSCVDFFNWCHLVPQHGVCNHKFYGKQCCKSCTRKI).

Requires Zn(2+) as cofactor. In terms of processing, the precursor is cleaved by a furin endopeptidase. Post-translationally, glycosylated. Can be O-fucosylated by POFUT2 on a serine or a threonine residue found within the consensus sequence C1-X(2)-(S/T)-C2-G of the TSP type-1 repeat domains where C1 and C2 are the first and second cysteine residue of the repeat, respectively. Fucosylated repeats can then be further glycosylated by the addition of a beta-1,3-glucose residue by the glucosyltransferase, B3GALTL. Fucosylation mediates the efficient secretion of ADAMTS family members. Can also be C-glycosylated with one or two mannose molecules on tryptophan residues within the consensus sequence W-X-X-W of the TPRs, and N-glycosylated. These other glycosylations can also facilitate secretion. Expressed in fetal lung, liver, and kidney and in adult brain, prostate, submaxillary gland, and endothelium.

The protein resides in the secreted. The protein localises to the extracellular space. It localises to the extracellular matrix. The polypeptide is A disintegrin and metalloproteinase with thrombospondin motifs 18 (ADAMTS18) (Homo sapiens (Human)).